The primary structure comprises 95 residues: Acyl carrier protein (95 aa).

One can recognise a Carrier domain in the interval Lys4 to Val79. Ser39 is modified (O-(pantetheine 4'-phosphoryl)serine).

The protein belongs to the acyl carrier protein (ACP) family. 4'-phosphopantetheine is transferred from CoA to a specific serine of apo-ACP by AcpS. This modification is essential for activity because fatty acids are bound in thioester linkage to the sulfhydryl of the prosthetic group.

It is found in the cytoplasm. It participates in lipid metabolism; fatty acid biosynthesis. Functionally, carrier of the growing fatty acid chain in fatty acid biosynthesis. This is Acyl carrier protein from Saccharopolyspora erythraea (strain ATCC 11635 / DSM 40517 / JCM 4748 / NBRC 13426 / NCIMB 8594 / NRRL 2338).